The following is a 413-amino-acid chain: Multifunctional CCA protein (413 aa).

ATP is bound by residues glycine 8 and arginine 11. CTP contacts are provided by glycine 8 and arginine 11. Residues aspartate 21 and aspartate 23 each contribute to the Mg(2+) site. The ATP site is built by arginine 91, arginine 143, and arginine 146. Arginine 91, arginine 143, and arginine 146 together coordinate CTP. Residues 232–333 (TGVHVMMVID…VRLLERADAL (102 aa)) enclose the HD domain.

Belongs to the tRNA nucleotidyltransferase/poly(A) polymerase family. Bacterial CCA-adding enzyme type 1 subfamily. Monomer. Can also form homodimers and oligomers. It depends on Mg(2+) as a cofactor. The cofactor is Ni(2+).

It carries out the reaction a tRNA precursor + 2 CTP + ATP = a tRNA with a 3' CCA end + 3 diphosphate. The enzyme catalyses a tRNA with a 3' CCA end + 2 CTP + ATP = a tRNA with a 3' CCACCA end + 3 diphosphate. Its function is as follows. Catalyzes the addition and repair of the essential 3'-terminal CCA sequence in tRNAs without using a nucleic acid template. Adds these three nucleotides in the order of C, C, and A to the tRNA nucleotide-73, using CTP and ATP as substrates and producing inorganic pyrophosphate. tRNA 3'-terminal CCA addition is required both for tRNA processing and repair. Also involved in tRNA surveillance by mediating tandem CCA addition to generate a CCACCA at the 3' terminus of unstable tRNAs. While stable tRNAs receive only 3'-terminal CCA, unstable tRNAs are marked with CCACCA and rapidly degraded. The polypeptide is Multifunctional CCA protein (Burkholderia mallei (strain NCTC 10247)).